The primary structure comprises 259 residues: Phosphonates import ATP-binding protein PhnC (259 aa).

The ABC transporter domain maps to 4–245 (ISIQSVTKRF…ALRTIYQREG (242 aa)). ATP is bound at residue 37–44 (GPSGAGKS).

This sequence belongs to the ABC transporter superfamily. Phosphonates importer (TC 3.A.1.9.1) family. In terms of assembly, the complex is composed of two ATP-binding proteins (PhnC), two transmembrane proteins (PhnE) and a solute-binding protein (PhnD).

It is found in the cell inner membrane. The catalysed reaction is phosphonate(out) + ATP + H2O = phosphonate(in) + ADP + phosphate + H(+). Part of the ABC transporter complex PhnCDE involved in phosphonates import. Responsible for energy coupling to the transport system. The polypeptide is Phosphonates import ATP-binding protein PhnC (Thiobacillus denitrificans (strain ATCC 25259 / T1)).